The primary structure comprises 427 residues: Glutamate-1-semialdehyde 2,1-aminomutase (427 aa).

Position 265 is an N6-(pyridoxal phosphate)lysine (Lys265).

The protein belongs to the class-III pyridoxal-phosphate-dependent aminotransferase family. HemL subfamily. In terms of assembly, homodimer. Pyridoxal 5'-phosphate serves as cofactor.

It localises to the cytoplasm. The catalysed reaction is (S)-4-amino-5-oxopentanoate = 5-aminolevulinate. Its pathway is porphyrin-containing compound metabolism; protoporphyrin-IX biosynthesis; 5-aminolevulinate from L-glutamyl-tRNA(Glu): step 2/2. In Pseudomonas aeruginosa (strain LESB58), this protein is Glutamate-1-semialdehyde 2,1-aminomutase.